A 483-amino-acid polypeptide reads, in one-letter code: Histone acetyltransferase esa1 (483 aa).

One can recognise a Tudor-knot domain in the interval Gln-10–Leu-53. Residues Val-57 to Lys-69 show a composition bias toward basic and acidic residues. Positions Val-57–Ser-127 are disordered. Positions His-195–Pro-471 constitute an MYST-type HAT domain. A C2HC MYST-type; degenerate zinc finger spans residues Ile-228–Leu-253. The ESA1-RPD3 motif signature appears at Arg-278 to Tyr-299. Lys-295 carries the post-translational modification N6-acetyllysine; by autocatalysis. Acetyl-CoA-binding positions include Ala-336 to Thr-340 and Gln-345 to Arg-351. Residue Glu-371 is the Proton donor/acceptor of the active site. Ser-375 provides a ligand contact to acetyl-CoA.

It belongs to the MYST (SAS/MOZ) family. Component of the NuA4 histone acetyltransferase complex. In terms of processing, autoacetylation at Lys-295 is required for proper function.

The protein resides in the nucleus. Its subcellular location is the chromosome. The catalysed reaction is L-lysyl-[histone] + acetyl-CoA = N(6)-acetyl-L-lysyl-[histone] + CoA + H(+). The enzyme catalyses L-lysyl-[protein] + acetyl-CoA = N(6)-acetyl-L-lysyl-[protein] + CoA + H(+). It catalyses the reaction 2-hydroxyisobutanoyl-CoA + L-lysyl-[protein] = N(6)-(2-hydroxyisobutanoyl)-L-lysyl-[protein] + CoA + H(+). It carries out the reaction (2E)-butenoyl-CoA + L-lysyl-[protein] = N(6)-(2E)-butenoyl-L-lysyl-[protein] + CoA + H(+). Catalytic component of the NuA4 histone acetyltransferase (HAT) complex which is involved in epigenetic transcriptional activation of selected genes principally by acetylation of nucleosomal histones H4, H3, H2B, H2A and H2A variant H2A.Z. Acetylates histone H4 to form H4K5ac, H4K8ac, H4K12ac and H4K16ac, histone H3 to form H3K14ac, and histone H2A to form H2AK4ac and H2AK7ac. The NuA4 complex is involved in the DNA damage response and is required for chromosome segregation. The NuA4 complex plays a direct role in repair of DNA double-strand breaks (DSBs) through homologous recombination. Recruitment to promoters depends on H3K4me. Also acetylates non-histone proteins. In addition to protein acetyltransferase, can use different acyl-CoA substrates, such as 2-hydroxyisobutanoyl-CoA (2-hydroxyisobutyryl-CoA) or (2E)-butenoyl-CoA (crotonyl-CoA), and is able to mediate protein 2-hydroxyisobutyrylation and crotonylation, respectively. The sequence is that of Histone acetyltransferase esa1 (esa1) from Aspergillus fumigatus (strain ATCC MYA-4609 / CBS 101355 / FGSC A1100 / Af293) (Neosartorya fumigata).